A 145-amino-acid chain; its full sequence is Bacilliredoxin SERP1006 (145 aa).

The protein belongs to the bacilliredoxin family.

This Staphylococcus epidermidis (strain ATCC 35984 / DSM 28319 / BCRC 17069 / CCUG 31568 / BM 3577 / RP62A) protein is Bacilliredoxin SERP1006.